The following is a 923-amino-acid chain: Phosphoenolpyruvate carboxylase (923 aa).

Active-site residues include histidine 149 and lysine 585.

It belongs to the PEPCase type 1 family. Requires Mg(2+) as cofactor.

It carries out the reaction oxaloacetate + phosphate = phosphoenolpyruvate + hydrogencarbonate. Forms oxaloacetate, a four-carbon dicarboxylic acid source for the tricarboxylic acid cycle. This is Phosphoenolpyruvate carboxylase from Nocardia farcinica (strain IFM 10152).